A 122-amino-acid chain; its full sequence is Large ribosomal subunit protein uL18 (122 aa).

It belongs to the universal ribosomal protein uL18 family. Part of the 50S ribosomal subunit; part of the 5S rRNA/L5/L18/L25 subcomplex. Contacts the 5S and 23S rRNAs.

This is one of the proteins that bind and probably mediate the attachment of the 5S RNA into the large ribosomal subunit, where it forms part of the central protuberance. The chain is Large ribosomal subunit protein uL18 from Prochlorococcus marinus (strain MIT 9215).